We begin with the raw amino-acid sequence, 473 residues long: Uronate isomerase (473 aa).

The protein belongs to the metallo-dependent hydrolases superfamily. Uronate isomerase family.

It carries out the reaction D-glucuronate = D-fructuronate. It catalyses the reaction aldehydo-D-galacturonate = keto-D-tagaturonate. Its pathway is carbohydrate metabolism; pentose and glucuronate interconversion. This is Uronate isomerase from Bacillus licheniformis (strain ATCC 14580 / DSM 13 / JCM 2505 / CCUG 7422 / NBRC 12200 / NCIMB 9375 / NCTC 10341 / NRRL NRS-1264 / Gibson 46).